The primary structure comprises 878 residues: Aconitate hydratase A (878 aa).

Residues C426, C492, and C495 each coordinate [4Fe-4S] cluster.

This sequence belongs to the aconitase/IPM isomerase family. Monomer. Requires [4Fe-4S] cluster as cofactor.

It catalyses the reaction citrate = D-threo-isocitrate. It carries out the reaction (2S,3R)-3-hydroxybutane-1,2,3-tricarboxylate = 2-methyl-cis-aconitate + H2O. It functions in the pathway carbohydrate metabolism; tricarboxylic acid cycle; isocitrate from oxaloacetate: step 2/2. It participates in organic acid metabolism; propanoate degradation. Involved in the catabolism of short chain fatty acids (SCFA) via the tricarboxylic acid (TCA)(acetyl degradation route) and probably the 2-methylcitrate cycle I (propionate degradation route). Catalyzes the reversible isomerization of citrate to isocitrate via cis-aconitate. Could catalyze the hydration of 2-methyl-cis-aconitate to yield (2R,3S)-2-methylisocitrate. The apo form of AcnA functions as a RNA-binding regulatory protein. The sequence is that of Aconitate hydratase A (acnA) from Rickettsia felis (strain ATCC VR-1525 / URRWXCal2) (Rickettsia azadi).